Consider the following 74-residue polypeptide: Protein A30 homolog (74 aa).

The protein belongs to the chordopoxvirinae A30 family. As to quaternary structure, interacts with protein G7; the interaction stabilizes both proteins. Post-translationally, phosphorylated by viral F10 kinase.

Its function is as follows. Required for the association between the dense viroplasm and the viral membranes to form the mature virion (MV). The protein is Protein A30 homolog of Fowlpox virus (strain NVSL) (FPV).